The sequence spans 352 residues: Uroporphyrinogen decarboxylase (352 aa).

Substrate-binding positions include 26 to 30 (RQAGR), Asp76, Tyr153, Ser208, and His323.

This sequence belongs to the uroporphyrinogen decarboxylase family. As to quaternary structure, homodimer.

The protein resides in the cytoplasm. It carries out the reaction uroporphyrinogen III + 4 H(+) = coproporphyrinogen III + 4 CO2. The protein operates within porphyrin-containing compound metabolism; protoporphyrin-IX biosynthesis; coproporphyrinogen-III from 5-aminolevulinate: step 4/4. Functionally, catalyzes the decarboxylation of four acetate groups of uroporphyrinogen-III to yield coproporphyrinogen-III. The chain is Uroporphyrinogen decarboxylase from Prochlorococcus marinus (strain MIT 9303).